The primary structure comprises 323 residues: Acetyl-coenzyme A carboxylase carboxyl transferase subunit alpha (323 aa).

The 255-residue stretch at 39 to 293 (RLAGKSQQLT…KRSLAESLRQ (255 aa)) folds into the CoA carboxyltransferase C-terminal domain.

The protein belongs to the AccA family. In terms of assembly, acetyl-CoA carboxylase is a heterohexamer composed of biotin carboxyl carrier protein (AccB), biotin carboxylase (AccC) and two subunits each of ACCase subunit alpha (AccA) and ACCase subunit beta (AccD).

The protein localises to the cytoplasm. It catalyses the reaction N(6)-carboxybiotinyl-L-lysyl-[protein] + acetyl-CoA = N(6)-biotinyl-L-lysyl-[protein] + malonyl-CoA. Its pathway is lipid metabolism; malonyl-CoA biosynthesis; malonyl-CoA from acetyl-CoA: step 1/1. Its function is as follows. Component of the acetyl coenzyme A carboxylase (ACC) complex. First, biotin carboxylase catalyzes the carboxylation of biotin on its carrier protein (BCCP) and then the CO(2) group is transferred by the carboxyltransferase to acetyl-CoA to form malonyl-CoA. The protein is Acetyl-coenzyme A carboxylase carboxyl transferase subunit alpha of Cupriavidus metallidurans (strain ATCC 43123 / DSM 2839 / NBRC 102507 / CH34) (Ralstonia metallidurans).